The sequence spans 350 residues: Probable arabinogalactan endo-beta-1,4-galactanase A (350 aa).

The signal sequence occupies residues 1 to 16 (MIYSLLLSALPLLSSA). N-linked (GlcNAc...) asparagine glycosylation is present at Asn-128. Residue Glu-152 is the Proton donor of the active site. Glu-262 serves as the catalytic Nucleophile.

This sequence belongs to the glycosyl hydrolase 53 family.

Its subcellular location is the secreted. It catalyses the reaction The enzyme specifically hydrolyzes (1-&gt;4)-beta-D-galactosidic linkages in type I arabinogalactans.. In terms of biological role, endogalactanase involved in the degradation of plant cell wall polysaccharides, and more particularly of hairy regions of pectin. This Aspergillus niger (strain ATCC MYA-4892 / CBS 513.88 / FGSC A1513) protein is Probable arabinogalactan endo-beta-1,4-galactanase A (galA).